The chain runs to 477 residues: Ribulose bisphosphate carboxylase large chain (477 aa).

A propeptide spanning residues Met1–Ser2 is cleaved from the precursor. Pro3 is modified (N-acetylproline). The residue at position 14 (Lys14) is an N6,N6,N6-trimethyllysine. The substrate site is built by Asn123 and Thr173. The active-site Proton acceptor is Lys175. Lys177 contacts substrate. Mg(2+) contacts are provided by Lys201, Asp203, and Glu204. Lys201 bears the N6-carboxylysine mark. His294 (proton acceptor) is an active-site residue. Substrate-binding residues include Arg295, His327, and Ser379.

Belongs to the RuBisCO large chain family. Type I subfamily. In terms of assembly, heterohexadecamer of 8 large chains and 8 small chains; disulfide-linked. The disulfide link is formed within the large subunit homodimers. Mg(2+) serves as cofactor. The disulfide bond which can form in the large chain dimeric partners within the hexadecamer appears to be associated with oxidative stress and protein turnover.

It is found in the plastid. It localises to the chloroplast. The enzyme catalyses 2 (2R)-3-phosphoglycerate + 2 H(+) = D-ribulose 1,5-bisphosphate + CO2 + H2O. It carries out the reaction D-ribulose 1,5-bisphosphate + O2 = 2-phosphoglycolate + (2R)-3-phosphoglycerate + 2 H(+). Its function is as follows. RuBisCO catalyzes two reactions: the carboxylation of D-ribulose 1,5-bisphosphate, the primary event in carbon dioxide fixation, as well as the oxidative fragmentation of the pentose substrate in the photorespiration process. Both reactions occur simultaneously and in competition at the same active site. This is Ribulose bisphosphate carboxylase large chain from Oryza nivara (Indian wild rice).